Reading from the N-terminus, the 65-residue chain is Large ribosomal subunit protein bL35 (65 aa).

It belongs to the bacterial ribosomal protein bL35 family.

The polypeptide is Large ribosomal subunit protein bL35 (Neisseria meningitidis serogroup A / serotype 4A (strain DSM 15465 / Z2491)).